We begin with the raw amino-acid sequence, 620 residues long: 1-deoxy-D-xylulose-5-phosphate synthase (620 aa).

Thiamine diphosphate-binding positions include histidine 80 and glycine 121–serine 123. Residue aspartate 152 participates in Mg(2+) binding. Residues glycine 153–alanine 154, asparagine 181, tyrosine 288, and glutamate 370 contribute to the thiamine diphosphate site. Asparagine 181 is a Mg(2+) binding site.

This sequence belongs to the transketolase family. DXPS subfamily. As to quaternary structure, homodimer. It depends on Mg(2+) as a cofactor. The cofactor is thiamine diphosphate.

It carries out the reaction D-glyceraldehyde 3-phosphate + pyruvate + H(+) = 1-deoxy-D-xylulose 5-phosphate + CO2. The protein operates within metabolic intermediate biosynthesis; 1-deoxy-D-xylulose 5-phosphate biosynthesis; 1-deoxy-D-xylulose 5-phosphate from D-glyceraldehyde 3-phosphate and pyruvate: step 1/1. In terms of biological role, catalyzes the acyloin condensation reaction between C atoms 2 and 3 of pyruvate and glyceraldehyde 3-phosphate to yield 1-deoxy-D-xylulose-5-phosphate (DXP). In Shigella flexneri, this protein is 1-deoxy-D-xylulose-5-phosphate synthase.